Reading from the N-terminus, the 697-residue chain is Polyribonucleotide nucleotidyltransferase (697 aa).

The Mg(2+) site is built by Asp488 and Asp494. The KH domain occupies 555 to 614 (PTFEVITINPDKIRDVIGKGGATIRQITEETKAAIDIEDNGTVRVFGETKAAAKAAIAKI). Positions 624 to 692 (GKIYDGKVIR…NRGRIKLTMK (69 aa)) constitute an S1 motif domain.

This sequence belongs to the polyribonucleotide nucleotidyltransferase family. Component of the RNA degradosome, which is a multiprotein complex involved in RNA processing and mRNA degradation. Mg(2+) serves as cofactor.

The protein resides in the cytoplasm. The catalysed reaction is RNA(n+1) + phosphate = RNA(n) + a ribonucleoside 5'-diphosphate. Functionally, involved in mRNA degradation. Catalyzes the phosphorolysis of single-stranded polyribonucleotides processively in the 3'- to 5'-direction. The sequence is that of Polyribonucleotide nucleotidyltransferase from Acinetobacter baumannii (strain AB307-0294).